Reading from the N-terminus, the 426-residue chain is Adenylosuccinate synthetase (426 aa).

Residues 14 to 20 (GDEGKGK) and 42 to 44 (GHT) contribute to the GTP site. The active-site Proton acceptor is D15. Mg(2+) is bound by residues D15 and G42. Residues 15–18 (DEGK), 40–43 (NAGH), T130, R144, Q224, T239, and R303 each bind IMP. H43 (proton donor) is an active-site residue. 299–305 (TVTKRPR) provides a ligand contact to substrate. GTP contacts are provided by residues R305, 331–333 (LID), and 413–415 (SVG).

Belongs to the adenylosuccinate synthetase family. Homodimer. It depends on Mg(2+) as a cofactor.

The protein resides in the cytoplasm. The catalysed reaction is IMP + L-aspartate + GTP = N(6)-(1,2-dicarboxyethyl)-AMP + GDP + phosphate + 2 H(+). It functions in the pathway purine metabolism; AMP biosynthesis via de novo pathway; AMP from IMP: step 1/2. Its function is as follows. Plays an important role in the de novo pathway of purine nucleotide biosynthesis. Catalyzes the first committed step in the biosynthesis of AMP from IMP. This is Adenylosuccinate synthetase from Malacoplasma penetrans (strain HF-2) (Mycoplasma penetrans).